Reading from the N-terminus, the 153-residue chain is Cytochrome c-554 (153 aa).

An N-terminal signal peptide occupies residues 1-20; that stretch reads MRPIPALALTFSLVAMPALA. Q21 carries the pyrrolidone carboxylic acid modification. Residues M37, C142, C145, and H146 each contribute to the heme c site.

Binds 1 heme c group covalently per subunit.

The protein resides in the periplasm. Monoheme c-type cytochrome, that is particularly expressed when cells generate energy via aerobic respiration. The protein is Cytochrome c-554 (cycF) of Cereibacter sphaeroides (strain ATCC 17023 / DSM 158 / JCM 6121 / CCUG 31486 / LMG 2827 / NBRC 12203 / NCIMB 8253 / ATH 2.4.1.) (Rhodobacter sphaeroides).